Consider the following 238-residue polypeptide: ATP synthase subunit a (238 aa).

A run of 5 helical transmembrane segments spans residues 15-35 (IFNL…FVFI), 76-96 (YSLF…LGLM), 111-131 (PTAN…LTHI), 167-187 (LALR…LLLL), and 208-230 (AFSV…VYLG).

It belongs to the ATPase A chain family. As to quaternary structure, F-type ATPases have 2 components, CF(1) - the catalytic core - and CF(0) - the membrane proton channel. CF(1) has five subunits: alpha(3), beta(3), gamma(1), delta(1), epsilon(1). CF(0) has three main subunits: a(1), b(2) and c(9-12). The alpha and beta chains form an alternating ring which encloses part of the gamma chain. CF(1) is attached to CF(0) by a central stalk formed by the gamma and epsilon chains, while a peripheral stalk is formed by the delta and b chains.

Its subcellular location is the cell membrane. Functionally, key component of the proton channel; it plays a direct role in the translocation of protons across the membrane. This is ATP synthase subunit a from Streptococcus pneumoniae (strain 70585).